Here is a 588-residue protein sequence, read N- to C-terminus: Peptidoglycan D,D-transpeptidase FtsI (588 aa).

Residues 19–39 traverse the membrane as a helical segment; sequence FISWRFALLCGCILLALAFLL. The active-site Acyl-ester intermediate is the serine 307. A propeptide spanning residues 578–588 is cleaved from the precursor; the sequence is INQGEGTGGRS.

Belongs to the transpeptidase family. FtsI subfamily.

It localises to the cell inner membrane. It carries out the reaction Preferential cleavage: (Ac)2-L-Lys-D-Ala-|-D-Ala. Also transpeptidation of peptidyl-alanyl moieties that are N-acyl substituents of D-alanine.. It participates in cell wall biogenesis; peptidoglycan biosynthesis. Functionally, catalyzes cross-linking of the peptidoglycan cell wall at the division septum. The sequence is that of Peptidoglycan D,D-transpeptidase FtsI from Escherichia coli O157:H7.